The following is a 31-amino-acid chain: Photosystem II reaction center protein Psb30 (31 aa).

A helical transmembrane segment spans residues 5–25 (IQLTSLLLIVIAGPLVIALLF).

It belongs to the Psb30/Ycf12 family. In terms of assembly, PSII is composed of 1 copy each of membrane proteins PsbA, PsbB, PsbC, PsbD, PsbE, PsbF, PsbH, PsbI, PsbJ, PsbK, PsbL, PsbM, PsbT, PsbX, PsbY, PsbZ, Psb30/Ycf12, peripheral proteins of the oxygen-evolving complex and a large number of cofactors. It forms dimeric complexes.

Its subcellular location is the plastid. It is found in the chloroplast thylakoid membrane. A core subunit of photosystem II (PSII), probably helps stabilize the reaction center. This Phacus acuminatus protein is Photosystem II reaction center protein Psb30.